Here is a 158-residue protein sequence, read N- to C-terminus: Biotin carboxyl carrier protein of acetyl-CoA carboxylase (158 aa).

The region spanning Tyr-81–Glu-157 is the Biotinyl-binding domain. Position 123 is an N6-biotinyllysine (Lys-123).

It is found in the plastid. The protein localises to the chloroplast. Its pathway is lipid metabolism; fatty acid biosynthesis. In terms of biological role, this protein is a component of the acetyl coenzyme A carboxylase complex; first, biotin carboxylase catalyzes the carboxylation of the carrier protein and then the transcarboxylase transfers the carboxyl group to form malonyl-CoA. The chain is Biotin carboxyl carrier protein of acetyl-CoA carboxylase (accB) from Pyropia yezoensis (Susabi-nori).